Here is a 1242-residue protein sequence, read N- to C-terminus: MLIKEYHILLPMSLDEYQVAQLYMIQKKSREESSGEGSGVEILANRPYTDGPGGNGQYTHKVYHVGSHIPGWFRALLPKAALQVEEESWNAYPYTRTRYTCPFVEKFSIEIETYYLPDGGQQPNVFNLSGAERRQRILDTIDIVRDAVAPGEYKAEEDPRLYRSVKTGRGPLADDWARTAAQTGPLMCAYKLCKVEFRYWGMQAKIEQFIHDVGLRRVMLRAHRQAWCWQDEWIELSMADIRALEEETARMLAQRMAKCNTGSEGPEAQTPGKPSTETQPGTRTAGTPDGPEAPPGPDASPDASFGKQWSSSSRSSYSSQHGGGVSPQSLSEWRMQNIARDSENSSEEEFFDAHEGFSDSDEVFPKEMTKWNSNDFIDAFASPTEVEGVPDPAIMATKGIEDEARAPRDSEGLDGTGDLGVEACSVHALFLILHSGSILDSGPGDTNSKQADVQTLSTAFEAVTRVHFPEALGHVALRLVPCPPICAAAYALVSNLSPYSHDGDSLSRSQDHIPLAALPLLATSSSRYQGAVATVIARTNQAYAAFLRSSEGTGFCGQVVLIGDGVGGILGFDALCHSASAGTGSRGSSRRGSMNNEMLSPEVGPVRDPLADGVEVLGRASPEPSALPAQRTSSDMANPDPDGSQNSLQVAPTVTSGEPRRASTASCPPASSEAPDGPTNAARLDFKVSGFFLFGSPLGLVLALRKTVMPALEVAQMRPACEQIYNLFHAADPCASRLEPLLAPKFQAIAPLAVPRYQKFPLGDGSSLLLADTLQTHSSLFLEELEMMVPSTPTSASGAFWKGNELGNEPAAQPAAPSTTSEVVKILDRWWGNKRIDYSLYCPEALTAFPTVTLPHLFHASYWESADVVAFILRQVIEKERPQLTECEEPSIYSPAFPREKWQRKRTQVKIRNVTSNHRASDTVVCEGRPQVLNGRFMYGPLDVVTLTGEKVDVYVMTQPLSGKWIHFGTEVTNSSGRLTFPVPSERALGIGVYPVRMVVRGDHTYAECCLTVVSRGTEAVVFSIDGSFTASVSIMGSDPKVRAGAVDVVRHWQDSGYLIVYVTGRPDMQKHRVVAWLSQHNFPHGVVSFCDGLTHDPLRQKAMFLQSLVQEVELNIVAGYGSPKDVAVYAALGLSPSQTYIVGRAVRKLQAQCQFLSDGYVAHLGQLEAGSHSHAPSGPPRAALAKSSYAVAAPVDFLRKQSQLLRSRGPSQVDLEGPGTPPTTLARGKTRSISLKLDSEE.

Residues T59, T282, and T287 each carry the phosphothreonine modification. The disordered stretch occupies residues 259-330 (CNTGSEGPEA…HGGGVSPQSL (72 aa)). The segment covering 272–282 (GKPSTETQPGT) has biased composition (polar residues). Residues 299–319 (ASPDASFGKQWSSSSRSSYSS) show a composition bias toward low complexity. 9 positions are modified to phosphoserine: S300, S304, S319, S326, S329, S342, S345, S346, and S373. A Phosphoserine; by CDK1 modification is found at S382. Positions 581 to 593 (AGTGSRGSSRRGS) are enriched in low complexity. The interval 581 to 678 (AGTGSRGSSR…PASSEAPDGP (98 aa)) is disordered. S593, S600, and S621 each carry phosphoserine. Positions 643–656 (GSQNSLQVAPTVTS) are enriched in polar residues. Positions 684–878 (LDFKVSGFFL…VAFILRQVIE (195 aa)) constitute a DDHD domain. The residue at position 894 (S894) is a Phosphoserine. The disordered stretch occupies residues 1207 to 1242 (RSRGPSQVDLEGPGTPPTTLARGKTRSISLKLDSEE). At R1209 the chain carries Omega-N-methylarginine. Phosphoserine is present on S1235.

This sequence belongs to the PtdIns transfer protein family. PI transfer class IIA subfamily. As to quaternary structure, interacts with PIK4CA and VAPB. Interacts with PTK2B via its C-terminus. Interacts with RHOA. Has higher affinity for the inactive, GDP-bound form of RHOA. The CDK1-phosphorylated form interacts with PLK1. In terms of processing, phosphorylated on multiple sites by CDK1 at the onset of mitosis. Phosphorylation facilitates dissociation from the Golgi complex and is required for interaction with PLK1. Post-translationally, phosphorylated on threonine residues upon treatment with oleic acid. Phosphorylated on tyrosine residues by PTK2B.

The protein resides in the cytoplasm. It is found in the golgi apparatus. The protein localises to the golgi stack membrane. Its subcellular location is the endoplasmic reticulum membrane. It localises to the lipid droplet. The protein resides in the cleavage furrow. It is found in the midbody. The catalysed reaction is a 1,2-diacyl-sn-glycero-3-phospho-(1D-myo-inositol)(in) = a 1,2-diacyl-sn-glycero-3-phospho-(1D-myo-inositol)(out). Its function is as follows. Catalyzes the transfer of phosphatidylinositol (PI) between membranes. Binds PI, phosphatidylcholine (PC) and phosphatidic acid (PA) with the binding affinity order of PI &gt; PA &gt; PC. Regulates RHOA activity, and plays a role in cytoskeleton remodeling. Necessary for normal completion of cytokinesis. Plays a role in maintaining normal diacylglycerol levels in the Golgi apparatus. Necessary for maintaining the normal structure of the endoplasmic reticulum and the Golgi apparatus. Required for protein export from the endoplasmic reticulum and the Golgi. Binds calcium ions. This is Membrane-associated phosphatidylinositol transfer protein 1 (Pitpnm1) from Rattus norvegicus (Rat).